We begin with the raw amino-acid sequence, 223 residues long: Prolactin-3D4 (223 aa).

A signal peptide spans 1-28 (MQLTLTLSGSSMQLLLLVSNLLLWENMA). 2 disulfide bridges follow: Cys80–Cys198 and Cys215–Cys223. N-linked (GlcNAc...) asparagine glycans are attached at residues Asn108 and Asn157.

It belongs to the somatotropin/prolactin family. In terms of processing, N-glycosylated.

It is found in the secreted. The chain is Prolactin-3D4 (Prl3d4) from Rattus norvegicus (Rat).